Reading from the N-terminus, the 356-residue chain is Protein RecA (356 aa).

67-74 (GPESSGKT) contributes to the ATP binding site.

This sequence belongs to the RecA family.

It is found in the cytoplasm. Can catalyze the hydrolysis of ATP in the presence of single-stranded DNA, the ATP-dependent uptake of single-stranded DNA by duplex DNA, and the ATP-dependent hybridization of homologous single-stranded DNAs. It interacts with LexA causing its activation and leading to its autocatalytic cleavage. This is Protein RecA from Yersinia pestis (strain Pestoides F).